The following is a 120-amino-acid chain: Large ribosomal subunit protein uL22 (120 aa).

This sequence belongs to the universal ribosomal protein uL22 family. In terms of assembly, part of the 50S ribosomal subunit.

Functionally, this protein binds specifically to 23S rRNA; its binding is stimulated by other ribosomal proteins, e.g. L4, L17, and L20. It is important during the early stages of 50S assembly. It makes multiple contacts with different domains of the 23S rRNA in the assembled 50S subunit and ribosome. In terms of biological role, the globular domain of the protein is located near the polypeptide exit tunnel on the outside of the subunit, while an extended beta-hairpin is found that lines the wall of the exit tunnel in the center of the 70S ribosome. In Corynebacterium kroppenstedtii (strain DSM 44385 / JCM 11950 / CIP 105744 / CCUG 35717), this protein is Large ribosomal subunit protein uL22.